We begin with the raw amino-acid sequence, 305 residues long: Chromatin modification-related protein EAF3 (305 aa).

Residues 14-67 form the Tudor-knot domain; sequence VLAYHGPLLYEARVILAEVWDESNTLLGTVGPHYFIHYKGWKQTWDEWVPESRL. Residues 86 to 127 are disordered; that stretch reads AKKGRSTGGSGGTGSPGAGKGGLKDKKKDTKKRGRDAMESES. Positions 91–106 are enriched in gly residues; the sequence is STGGSGGTGSPGAGKG. Residues 131–304 form the MRG domain; the sequence is KRPEVKIVIP…TTTHYQNLSR (174 aa).

The protein belongs to the MRG family. As to quaternary structure, component of the NuA4 histone acetyltransferase complex.

The protein localises to the nucleus. Its function is as follows. Involved in deacetylation of histones, chromatin assembly and chromosome segregation. May act as a transcriptional oscillator, directing histone deacetylases to specific chromosomal domains. Component of the NuA4 histone acetyltransferase complex which is involved in transcriptional activation of selected genes principally by acetylation of nucleosomal histone H4 and H2A. The NuA4 complex is also involved in DNA repair. This Cryptococcus neoformans var. neoformans serotype D (strain B-3501A) (Filobasidiella neoformans) protein is Chromatin modification-related protein EAF3 (EAF3).